We begin with the raw amino-acid sequence, 241 residues long: Probable transcriptional regulatory protein Rmet_0785 (241 aa).

The protein belongs to the TACO1 family.

The protein localises to the cytoplasm. The chain is Probable transcriptional regulatory protein Rmet_0785 from Cupriavidus metallidurans (strain ATCC 43123 / DSM 2839 / NBRC 102507 / CH34) (Ralstonia metallidurans).